The chain runs to 238 residues: MNVALIFAGGVGTRMQNSTKPKQFLELYNKPVIIYTLEKFEENKNIDAIVVVCVEPWIDYLRKLLFKFDIQKVKFVIPGGETGQESIFNGLCKIEEEFDHNSVVLIHDGVRPLINDEIINRNIEAVKSHGSAITTCPPVETFVLVDNEDVVKDVHDRSLSRLAKAPQSFYLRDILKVHRQAREDCYTEAIDSCSLMTKYGYDVRLVSGISENIKITSPIDFFIFKAIIDTQENLQVFG.

CTP contacts are provided by residues F7–G10 and G80–S86.

It belongs to the IspD/TarI cytidylyltransferase family. TarI subfamily.

It catalyses the reaction D-ribitol 5-phosphate + CTP + H(+) = CDP-L-ribitol + diphosphate. Catalyzes the transfer of the cytidylyl group of CTP to D-ribitol 5-phosphate. The polypeptide is Ribitol-5-phosphate cytidylyltransferase (Vibrio parahaemolyticus serotype O3:K6 (strain RIMD 2210633)).